Reading from the N-terminus, the 72-residue chain is Cytochrome b-c1 complex subunit 8-2, mitochondrial (72 aa).

The Mitochondrial matrix segment spans residues 1–41 (MGKQPVKLKAVVYALSPFQQKIMTGLWKDLPEKIHHKVSEN). Residues 42–58 (WISTILLVAPVVGTYSY) traverse the membrane as a helical segment. Residues 59–72 (AQYFKEQEKLEHRF) lie on the Mitochondrial intermembrane side of the membrane.

This sequence belongs to the UQCRQ/QCR8 family. In terms of assembly, component of the ubiquinol-cytochrome c oxidoreductase (cytochrome b-c1 complex, complex III, CIII), a multisubunit enzyme composed of 10 subunits. The complex is composed of 3 respiratory subunits cytochrome b (MT-CYB), cytochrome c1 (CYC1-1 or CYC1-2) and Rieske protein (UCR1-1 or UCR1-2), 2 core protein subunits MPPalpha1 (or MPPalpha2) and MPPB, and 5 low-molecular weight protein subunits QCR7-1 (or QCR7-2), UCRQ-1 (or UCRQ-2), QCR9, UCRY and probably QCR6-1 (or QCR6-2). The complex exists as an obligatory dimer and forms supercomplexes (SCs) in the inner mitochondrial membrane with NADH-ubiquinone oxidoreductase (complex I, CI), resulting in different assemblies (supercomplexes SCI(1)III(2) and SCI(2)III(4)).

Its subcellular location is the mitochondrion inner membrane. In terms of biological role, component of the ubiquinol-cytochrome c oxidoreductase, a multisubunit transmembrane complex that is part of the mitochondrial electron transport chain which drives oxidative phosphorylation. The respiratory chain contains 3 multisubunit complexes succinate dehydrogenase (complex II, CII), ubiquinol-cytochrome c oxidoreductase (cytochrome b-c1 complex, complex III, CIII) and cytochrome c oxidase (complex IV, CIV), that cooperate to transfer electrons derived from NADH and succinate to molecular oxygen, creating an electrochemical gradient over the inner membrane that drives transmembrane transport and the ATP synthase. The cytochrome b-c1 complex catalyzes electron transfer from ubiquinol to cytochrome c, linking this redox reaction to translocation of protons across the mitochondrial inner membrane, with protons being carried across the membrane as hydrogens on the quinol. In the process called Q cycle, 2 protons are consumed from the matrix, 4 protons are released into the intermembrane space and 2 electrons are passed to cytochrome c. The chain is Cytochrome b-c1 complex subunit 8-2, mitochondrial (UCRQ-2) from Arabidopsis thaliana (Mouse-ear cress).